Consider the following 252-residue polypeptide: 14-3-3 protein 10 (252 aa).

This sequence belongs to the 14-3-3 family. In terms of assembly, homodimer.

The protein is 14-3-3 protein 10 (TFT10) of Solanum lycopersicum (Tomato).